Here is a 414-residue protein sequence, read N- to C-terminus: Ornithine aminotransferase (414 aa).

The cysteines at positions 154 and 163 are disulfide-linked. Residue lysine 262 is modified to N6-(pyridoxal phosphate)lysine.

This sequence belongs to the class-III pyridoxal-phosphate-dependent aminotransferase family. In terms of assembly, homodimer. Pyridoxal 5'-phosphate serves as cofactor. Post-translationally, the disulfide bond between Cys-154 and Cys-163 is reduced by TRX1 which increases OAT catalytic activity.

Its subcellular location is the cytoplasm. The catalysed reaction is a 2-oxocarboxylate + L-ornithine = L-glutamate 5-semialdehyde + an L-alpha-amino acid. It carries out the reaction L-ornithine + 2-oxoglutarate = L-glutamate 5-semialdehyde + L-glutamate. It participates in amino-acid biosynthesis; L-proline biosynthesis; L-glutamate 5-semialdehyde from L-ornithine: step 1/1. With respect to regulation, unlike for mammalian OATs, activity is increased by TRX1-mediated reduction of the disulfide bond between Cys-154 and Cys-163. Binding to TRX1 may also induce conformational changes that facilitate substrate binding. In terms of biological role, catalyzes the transamination of alpha-ketoglutarate with ornithine or N-acetylornithine and of glutamate-5-semialdehyde with glutamate and alanine. In Plasmodium yoelii yoelii, this protein is Ornithine aminotransferase.